Reading from the N-terminus, the 273-residue chain is MSELRFVRLGFGEQAVEYTEAWQKQREVHADRFEDRVPDTCLLLEHPPVYTAGRRTAESERPLDGTPVVDVDRGGKITWHGPGQLVGYPIQKLPRPVDVVAHVRRLEEALIRTAADFGVETSRIEGRSGVWVLGDPVERRQALGGLSLDFDPRLQDEEFDPRLNGPEYAPSNAGQRREDRKLAAIGIRVAKGVTMHGFALNVNPDNTWFDRIVPCGIRDAGVTSLSAELGREVTVEEVLPVAERHLRDILENAELAPRAVEQPKAAAPAPAPA.

A BPL/LPL catalytic domain is found at 35–254; it reads DRVPDTCLLL…HLRDILENAE (220 aa). Substrate-binding positions include 73 to 80, 184 to 186, and 197 to 199; these read RGGKITWH, AIG, and GFA. The active-site Acyl-thioester intermediate is C215.

It belongs to the LipB family.

The protein localises to the cytoplasm. It carries out the reaction octanoyl-[ACP] + L-lysyl-[protein] = N(6)-octanoyl-L-lysyl-[protein] + holo-[ACP] + H(+). The protein operates within protein modification; protein lipoylation via endogenous pathway; protein N(6)-(lipoyl)lysine from octanoyl-[acyl-carrier-protein]: step 1/2. In terms of biological role, catalyzes the transfer of endogenously produced octanoic acid from octanoyl-acyl-carrier-protein onto the lipoyl domains of lipoate-dependent enzymes. Lipoyl-ACP can also act as a substrate although octanoyl-ACP is likely to be the physiological substrate. The sequence is that of Octanoyltransferase from Streptomyces griseus subsp. griseus (strain JCM 4626 / CBS 651.72 / NBRC 13350 / KCC S-0626 / ISP 5235).